The primary structure comprises 268 residues: Proenkephalin-A (268 aa).

Positions 1-24 are cleaved as a signal peptide; that stretch reads MARLLRLCTWLVALGPGLLATVQA. Disulfide bonds link Cys26/Cys48, Cys30/Cys52, and Cys33/Cys65. A disordered region spans residues 163 to 184; that stretch reads TGDDRDRENHHQEGGDSDEGVS. Over residues 164 to 176 the composition is skewed to basic and acidic residues; sequence GDDRDRENHHQEG. 2 consecutive propeptides follow at residues 197–208 and 218–228; these read SPQVEDEAKELQ and VGRPEWWMDYQ. Position 252 is a phosphoserine (Ser252).

It belongs to the opioid neuropeptide precursor family. Proenkephalin-A is cleaved by CTSL to generate Met-enkephalin. Post-translationally, processed and degraded by ACE. In terms of processing, probably cleaved by ACE. Processed by ACE to generate Met-enkephalin in the nucleus accumbens of the brain. Post-translationally, the N-terminal domain contains 6 conserved cysteines thought to be involved in disulfide bonding and/or processing.

The protein resides in the cytoplasmic vesicle. It is found in the secretory vesicle. It localises to the chromaffin granule lumen. The protein localises to the secreted. Functionally, neuropeptide that competes with and mimic the effects of opiate drugs. They play a role in a number of physiologic functions, including pain perception and responses to stress. Met-enkephalin-Arg-Phe neuropeptide acts as a strong ligand of Mu-type opioid receptor OPRM1. Met-enkephalin-Arg-Phe-binding to OPRM1 in the nucleus accumbens of the brain increases activation of OPRM1, leading to long-term synaptic depression of glutamate release. Its function is as follows. Increases glutamate release in the striatum and decreases GABA concentration in the striatum. In terms of biological role, increases glutamate release in the striatum. This chain is Proenkephalin-A (PENK), found in Cavia porcellus (Guinea pig).